A 214-amino-acid chain; its full sequence is Outer-membrane lipoprotein carrier protein (214 aa).

An N-terminal signal peptide occupies residues methionine 1–alanine 23.

Belongs to the LolA family. In terms of assembly, monomer.

It localises to the periplasm. In terms of biological role, participates in the translocation of lipoproteins from the inner membrane to the outer membrane. Only forms a complex with a lipoprotein if the residue after the N-terminal Cys is not an aspartate (The Asp acts as a targeting signal to indicate that the lipoprotein should stay in the inner membrane). The chain is Outer-membrane lipoprotein carrier protein from Shewanella frigidimarina (strain NCIMB 400).